Reading from the N-terminus, the 116-residue chain is Non-specific lipid-transfer protein 1 (116 aa).

A signal peptide spans 1–25 (MARAQLVLVALVAALLLAAPHAAVA). 4 disulfide bridges follow: Cys-28–Cys-75, Cys-38–Cys-52, Cys-53–Cys-98, and Cys-73–Cys-112.

The protein belongs to the plant LTP family. Aleurone (external part) of the seeds.

Plant non-specific lipid-transfer proteins transfer phospholipids as well as galactolipids across membranes. May play a role in wax or cutin deposition in the cell walls of expanding epidermal cells and certain secretory tissues. The chain is Non-specific lipid-transfer protein 1 (LTP) from Oryza sativa subsp. indica (Rice).